The primary structure comprises 755 residues: Glucosylglycerol-phosphate synthase (755 aa).

It belongs to the glycosyltransferase 20 family.

The catalysed reaction is ADP-alpha-D-glucose + sn-glycerol 3-phosphate = 2-O-(alpha-D-glucopyranosyl)-sn-glycerol 3-phosphate + ADP + H(+). It functions in the pathway glycan metabolism; glucosylglycerol biosynthesis. Involved in salt tolerance by producing GG-phosphate from ADP-glucose and glycerol-3-phosphate (G3P), an intermediate in the synthesis of the osmolyte glucosylglycerol (GG). This is Glucosylglycerol-phosphate synthase (ggpS) from Pseudomonas anguilliseptica.